Consider the following 248-residue polypeptide: Pyridoxine 5'-phosphate synthase (248 aa).

Residue N12 coordinates 3-amino-2-oxopropyl phosphate. Position 14–15 (14–15 (DH)) interacts with 1-deoxy-D-xylulose 5-phosphate. R23 is a binding site for 3-amino-2-oxopropyl phosphate. The active-site Proton acceptor is the H48. The 1-deoxy-D-xylulose 5-phosphate site is built by R50 and H55. The Proton acceptor role is filled by E75. Position 105 (T105) interacts with 1-deoxy-D-xylulose 5-phosphate. Residue H196 is the Proton donor of the active site. Residues G197 and 218 to 219 (GH) each bind 3-amino-2-oxopropyl phosphate.

Belongs to the PNP synthase family. In terms of assembly, homooctamer; tetramer of dimers.

The protein localises to the cytoplasm. The enzyme catalyses 3-amino-2-oxopropyl phosphate + 1-deoxy-D-xylulose 5-phosphate = pyridoxine 5'-phosphate + phosphate + 2 H2O + H(+). It participates in cofactor biosynthesis; pyridoxine 5'-phosphate biosynthesis; pyridoxine 5'-phosphate from D-erythrose 4-phosphate: step 5/5. Functionally, catalyzes the complicated ring closure reaction between the two acyclic compounds 1-deoxy-D-xylulose-5-phosphate (DXP) and 3-amino-2-oxopropyl phosphate (1-amino-acetone-3-phosphate or AAP) to form pyridoxine 5'-phosphate (PNP) and inorganic phosphate. In Pseudomonas fluorescens (strain ATCC BAA-477 / NRRL B-23932 / Pf-5), this protein is Pyridoxine 5'-phosphate synthase.